The sequence spans 387 residues: Phosphoglycerate kinase (387 aa).

Substrate is bound by residues 21–23 (DLN), arginine 36, 59–62 (HLGR), arginine 113, and arginine 146. ATP is bound by residues lysine 197, glutamate 314, and 340-343 (GGDT).

It belongs to the phosphoglycerate kinase family. In terms of assembly, monomer.

Its subcellular location is the cytoplasm. The catalysed reaction is (2R)-3-phosphoglycerate + ATP = (2R)-3-phospho-glyceroyl phosphate + ADP. It functions in the pathway carbohydrate degradation; glycolysis; pyruvate from D-glyceraldehyde 3-phosphate: step 2/5. The sequence is that of Phosphoglycerate kinase from Aeromonas salmonicida (strain A449).